A 635-amino-acid polypeptide reads, in one-letter code: Chaperone protein DnaK (635 aa).

Threonine 200 carries the post-translational modification Phosphothreonine; by autocatalysis. The disordered stretch occupies residues 595 to 635; it reads KAQPLTEKVQAKSSAENTSKEKSKADDDVVDADFEEVKDDK. Residues 612-621 show a composition bias toward basic and acidic residues; sequence TSKEKSKADD. Residues 622 to 635 show a composition bias toward acidic residues; the sequence is DVVDADFEEVKDDK.

The protein belongs to the heat shock protein 70 family.

Functionally, acts as a chaperone. In Ruthia magnifica subsp. Calyptogena magnifica, this protein is Chaperone protein DnaK.